The primary structure comprises 244 residues: tRNA pseudouridine synthase A (244 aa).

The active-site Nucleophile is the aspartate 52. Tyrosine 110 contacts substrate.

Belongs to the tRNA pseudouridine synthase TruA family. As to quaternary structure, homodimer.

It catalyses the reaction uridine(38/39/40) in tRNA = pseudouridine(38/39/40) in tRNA. Formation of pseudouridine at positions 38, 39 and 40 in the anticodon stem and loop of transfer RNAs. This Brevibacillus brevis (strain 47 / JCM 6285 / NBRC 100599) protein is tRNA pseudouridine synthase A.